The chain runs to 409 residues: Mitochondrial inner membrane protein oxa1-2 (409 aa).

The chain crosses the membrane as a helical span at residues 76–96 (VVYTPSLPLSSSVLASFSFLP). Topologically, residues 97–114 (HNILQNGLNTLHIWSGLP) are mitochondrial intermembrane. The helical transmembrane segment at 115-135 (WWASIAACAVAMRIAVFPIML) threads the bilayer. The Mitochondrial matrix segment spans residues 136-188 (KMMKTSAKLAIINPKVAEHMSVLSKAKAEGNSELMMQATTQIQNLYKVNNVNP). A helical membrane pass occupies residues 189 to 209 (LNLLSAPVFQGILFISFFYAL). Over 210–235 (KTMAGVPVEGFTDGGFWWVNDLSQPD) the chain is Mitochondrial intermembrane. The helical transmembrane segment at 236 to 256 (PLHIFPVANGLLMLLNIELGS) threads the bilayer. The Mitochondrial matrix portion of the chain corresponds to 257–275 (ETGSNKVAMSPSMKKFFRF). Residues 276 to 296 (LCLASPLFTMNFPMAIFMYWF) form a helical membrane-spanning segment. Residues 297-409 (PSNVFSVFQG…SVTKPTEKKD (113 aa)) lie on the Mitochondrial intermembrane side of the membrane. Positions 369-409 (TDTNNEQKPTNNSTITKATTLSDNSQNDKSSSVTKPTEKKD) are disordered. Residues 374–403 (EQKPTNNSTITKATTLSDNSQNDKSSSVTK) are compositionally biased toward polar residues.

The protein belongs to the OXA1/ALB3/YidC family.

The protein resides in the mitochondrion inner membrane. Its function is as follows. Required for the insertion of integral membrane proteins into the mitochondrial inner membrane. Essential for the activity and assembly of cytochrome c oxidase. It is essential for viability while oxa101 is not. When both are deleted the cell is non-viable, suggesting that oxa101 act as a back-up for oxa102. In Schizosaccharomyces pombe (strain 972 / ATCC 24843) (Fission yeast), this protein is Mitochondrial inner membrane protein oxa1-2 (oxa102).